The following is a 252-amino-acid chain: 3-dehydroquinate dehydratase (252 aa).

Residues Ser-21, 46 to 48 (EWR), and Arg-82 contribute to the 3-dehydroquinate site. The active-site Proton donor/acceptor is the His-143. Lys-170 acts as the Schiff-base intermediate with substrate in catalysis. 3 residues coordinate 3-dehydroquinate: Arg-213, Ser-232, and Gln-236.

The protein belongs to the type-I 3-dehydroquinase family. In terms of assembly, homodimer.

It carries out the reaction 3-dehydroquinate = 3-dehydroshikimate + H2O. It functions in the pathway metabolic intermediate biosynthesis; chorismate biosynthesis; chorismate from D-erythrose 4-phosphate and phosphoenolpyruvate: step 3/7. Its function is as follows. Involved in the third step of the chorismate pathway, which leads to the biosynthesis of aromatic amino acids. Catalyzes the cis-dehydration of 3-dehydroquinate (DHQ) and introduces the first double bond of the aromatic ring to yield 3-dehydroshikimate. In Salmonella paratyphi A (strain ATCC 9150 / SARB42), this protein is 3-dehydroquinate dehydratase.